The sequence spans 381 residues: Creatine kinase B-type (381 aa).

Residue Ser-4 is modified to Phosphoserine. The Phosphagen kinase N-terminal domain occupies 11–98; the sequence is KLRFPAEDEF…FDPIIEERHG (88 aa). Thr-35 carries the phosphothreonine modification. A Glycyl lysine isopeptide (Lys-Gly) (interchain with G-Cter in ubiquitin) cross-link involves residue Lys-45. Val-72 is a binding site for creatine. Basic and acidic residues predominate over residues 96-110; it reads RHGGYQPSDEHKTDL. The disordered stretch occupies residues 96 to 123; the sequence is RHGGYQPSDEHKTDLNPDNLQGGDDLDP. Lys-107 is covalently cross-linked (Glycyl lysine isopeptide (Lys-Gly) (interchain with G-Cter in ubiquitin)). Residue Tyr-125 is modified to Phosphotyrosine. The 243-residue stretch at 125–367 folds into the Phosphagen kinase C-terminal domain; it reads YVLSSRVRTG…KLLIEMEQRL (243 aa). ATP is bound by residues 128–132, Arg-130, Arg-132, and His-191; that span reads SSRVR. The tract at residues 130–138 is internal MTS-like signal; sequence RVRTGRSIR. Residue Ser-199 is modified to Phosphoserine. A creatine-binding site is contributed by Glu-232. Residue Arg-236 coordinates ATP. Position 269 is a 3'-nitrotyrosine (Tyr-269). Position 285 (Ser-285) interacts with creatine. Arg-292 provides a ligand contact to ATP. Ser-309 carries the phosphoserine modification. Residues Arg-320, 320–325, and Asp-335 each bind ATP; that span reads RGTGGV. Thr-322 bears the Phosphothreonine mark. Lys-381 participates in a covalent cross-link: Glycyl lysine isopeptide (Lys-Gly) (interchain with G-Cter in ubiquitin).

Belongs to the ATP:guanido phosphotransferase family. As to quaternary structure, dimer of identical or non-identical chains, which can be either B (brain type) or M (muscle type). With MM being the major form in skeletal muscle and myocardium, MB existing in myocardium, and BB existing in many tissues, especially brain. Interacts with SLC12A6 (via C-terminus); the interaction may be required for SLC12A6 potassium-chloride cotransport activity. In terms of processing, ubiquitinated by the ECS(ASB9) complex, leading to its degradation by the proteasome. In terms of tissue distribution, expressed in hippocampus and corpus callosum (at protein level).

Its subcellular location is the cytoplasm. It is found in the cytosol. The protein localises to the mitochondrion. The protein resides in the cell membrane. The catalysed reaction is creatine + ATP = N-phosphocreatine + ADP + H(+). In terms of biological role, reversibly catalyzes the transfer of phosphate between ATP and various phosphogens (e.g. creatine phosphate). Creatine kinase isoenzymes play a central role in energy transduction in tissues with large, fluctuating energy demands, such as skeletal muscle, heart, brain and spermatozoa. Acts as a key regulator of adaptive thermogenesis as part of the futile creatine cycle: localizes to the mitochondria of thermogenic fat cells and acts by mediating phosphorylation of creatine to initiate a futile cycle of creatine phosphorylation and dephosphorylation. During the futile creatine cycle, creatine and N-phosphocreatine are in a futile cycle, which dissipates the high energy charge of N-phosphocreatine as heat without performing any mechanical or chemical work. The sequence is that of Creatine kinase B-type from Mus musculus (Mouse).